The primary structure comprises 337 residues: Ketol-acid reductoisomerase (NADP(+)) (337 aa).

The 181-residue stretch at 3–183 (IELLYDADAD…GGARAGVIPT (181 aa)) folds into the KARI N-terminal Rossmann domain. NADP(+)-binding positions include 26 to 29 (YGSQ), Arg-49, Ser-52, Ser-54, and 84 to 87 (DTSQ). His-109 is an active-site residue. Gly-135 lines the NADP(+) pocket. The region spanning 184 to 329 (TFREETETDL…SKLRDLMSWV (146 aa)) is the KARI C-terminal knotted domain. Mg(2+)-binding residues include Asp-192, Glu-196, Glu-228, and Glu-232. Substrate is bound at residue Ser-253.

Belongs to the ketol-acid reductoisomerase family. Mg(2+) is required as a cofactor.

The catalysed reaction is (2R)-2,3-dihydroxy-3-methylbutanoate + NADP(+) = (2S)-2-acetolactate + NADPH + H(+). The enzyme catalyses (2R,3R)-2,3-dihydroxy-3-methylpentanoate + NADP(+) = (S)-2-ethyl-2-hydroxy-3-oxobutanoate + NADPH + H(+). The protein operates within amino-acid biosynthesis; L-isoleucine biosynthesis; L-isoleucine from 2-oxobutanoate: step 2/4. It functions in the pathway amino-acid biosynthesis; L-valine biosynthesis; L-valine from pyruvate: step 2/4. In terms of biological role, involved in the biosynthesis of branched-chain amino acids (BCAA). Catalyzes an alkyl-migration followed by a ketol-acid reduction of (S)-2-acetolactate (S2AL) to yield (R)-2,3-dihydroxy-isovalerate. In the isomerase reaction, S2AL is rearranged via a Mg-dependent methyl migration to produce 3-hydroxy-3-methyl-2-ketobutyrate (HMKB). In the reductase reaction, this 2-ketoacid undergoes a metal-dependent reduction by NADPH to yield (R)-2,3-dihydroxy-isovalerate. The chain is Ketol-acid reductoisomerase (NADP(+)) from Corynebacterium diphtheriae (strain ATCC 700971 / NCTC 13129 / Biotype gravis).